Reading from the N-terminus, the 147-residue chain is Lysozyme C (147 aa).

Residues 1 to 18 (MRSLLVLVLCFLPLAALG) form the signal peptide. The region spanning 19–147 (KVYGRCELAA…VNAWIRGCRL (129 aa)) is the C-type lysozyme domain. 4 cysteine pairs are disulfide-bonded: Cys-24–Cys-145, Cys-48–Cys-133, Cys-82–Cys-98, and Cys-94–Cys-112. Residues Glu-53 and Asp-70 contribute to the active site.

It belongs to the glycosyl hydrolase 22 family. Monomer.

The protein resides in the secreted. The enzyme catalyses Hydrolysis of (1-&gt;4)-beta-linkages between N-acetylmuramic acid and N-acetyl-D-glucosamine residues in a peptidoglycan and between N-acetyl-D-glucosamine residues in chitodextrins.. In terms of biological role, lysozymes have primarily a bacteriolytic function; those in tissues and body fluids are associated with the monocyte-macrophage system and enhance the activity of immunoagents. The protein is Lysozyme C (LYZ) of Coturnix japonica (Japanese quail).